Here is a 211-residue protein sequence, read N- to C-terminus: MTSQRTRERLIQRLYEEGLSNARVLEVIRRTPRHLFVDEALAHRAYEDTALPIGHNQTISQPYMVGRMTELLLAAGPLDKVLEIGTGSGYQTAVLAQLVERVFSVERIQVLQDRAKERLAELSLRNVVFRWGDGWEGWNALGPYNGIIVTAAAAQVPQALLDQLAPGGRLVIPVGAGDVQQLLLIVREEHGFSRHVLDAVRFVPLLNGPLA.

Serine 60 is an active-site residue.

It belongs to the methyltransferase superfamily. L-isoaspartyl/D-aspartyl protein methyltransferase family.

The protein resides in the cytoplasm. The catalysed reaction is [protein]-L-isoaspartate + S-adenosyl-L-methionine = [protein]-L-isoaspartate alpha-methyl ester + S-adenosyl-L-homocysteine. Catalyzes the methyl esterification of L-isoaspartyl residues in peptides and proteins that result from spontaneous decomposition of normal L-aspartyl and L-asparaginyl residues. It plays a role in the repair and/or degradation of damaged proteins. The protein is Protein-L-isoaspartate O-methyltransferase of Ectopseudomonas mendocina (strain ymp) (Pseudomonas mendocina).